A 150-amino-acid polypeptide reads, in one-letter code: Cytochrome c oxidase subunit 5A, mitochondrial (150 aa).

The transit peptide at 1–41 (MLGAALRRCAVAATTRAGPRGLLHSARTPGPAAAIQSVRCY) directs the protein to the mitochondrion. Residues 2–17 (LGAALRRCAVAATTRA) carry the SIFI-degron motif. Lysine 87 and lysine 113 each carry N6-acetyllysine. Threonine 141 carries the phosphothreonine modification.

This sequence belongs to the cytochrome c oxidase subunit 5A family. As to quaternary structure, component of the cytochrome c oxidase (complex IV, CIV), a multisubunit enzyme composed of 14 subunits. The complex is composed of a catalytic core of 3 subunits MT-CO1, MT-CO2 and MT-CO3, encoded in the mitochondrial DNA, and 11 supernumerary subunits COX4I, COX5A, COX5B, COX6A, COX6B, COX6C, COX7A, COX7B, COX7C, COX8 and NDUFA4, which are encoded in the nuclear genome. The complex exists as a monomer or a dimer and forms supercomplexes (SCs) in the inner mitochondrial membrane with NADH-ubiquinone oxidoreductase (complex I, CI) and ubiquinol-cytochrome c oxidoreductase (cytochrome b-c1 complex, complex III, CIII), resulting in different assemblies (supercomplex SCI(1)III(2)IV(1) and megacomplex MCI(2)III(2)IV(2)). Interacts with AFG1L. Interacts with RAB5IF. Post-translationally, in response to mitochondrial stress, the precursor protein is ubiquitinated by the SIFI complex in the cytoplasm before mitochondrial import, leading to its degradation. Within the SIFI complex, UBR4 initiates ubiquitin chain that are further elongated or branched by KCMF1.

The protein localises to the mitochondrion inner membrane. It functions in the pathway energy metabolism; oxidative phosphorylation. Its function is as follows. Component of the cytochrome c oxidase, the last enzyme in the mitochondrial electron transport chain which drives oxidative phosphorylation. The respiratory chain contains 3 multisubunit complexes succinate dehydrogenase (complex II, CII), ubiquinol-cytochrome c oxidoreductase (cytochrome b-c1 complex, complex III, CIII) and cytochrome c oxidase (complex IV, CIV), that cooperate to transfer electrons derived from NADH and succinate to molecular oxygen, creating an electrochemical gradient over the inner membrane that drives transmembrane transport and the ATP synthase. Cytochrome c oxidase is the component of the respiratory chain that catalyzes the reduction of oxygen to water. Electrons originating from reduced cytochrome c in the intermembrane space (IMS) are transferred via the dinuclear copper A center (CU(A)) of subunit 2 and heme A of subunit 1 to the active site in subunit 1, a binuclear center (BNC) formed by heme A3 and copper B (CU(B)). The BNC reduces molecular oxygen to 2 water molecules using 4 electrons from cytochrome c in the IMS and 4 protons from the mitochondrial matrix. This is Cytochrome c oxidase subunit 5A, mitochondrial (COX5A) from Pan troglodytes (Chimpanzee).